A 541-amino-acid chain; its full sequence is Glucose-6-phosphate isomerase (541 aa).

The active-site Proton donor is the E353. Residues H384 and K504 contribute to the active site.

This sequence belongs to the GPI family.

The protein resides in the cytoplasm. The catalysed reaction is alpha-D-glucose 6-phosphate = beta-D-fructose 6-phosphate. It functions in the pathway carbohydrate biosynthesis; gluconeogenesis. Its pathway is carbohydrate degradation; glycolysis; D-glyceraldehyde 3-phosphate and glycerone phosphate from D-glucose: step 2/4. Catalyzes the reversible isomerization of glucose-6-phosphate to fructose-6-phosphate. This chain is Glucose-6-phosphate isomerase, found in Deinococcus radiodurans (strain ATCC 13939 / DSM 20539 / JCM 16871 / CCUG 27074 / LMG 4051 / NBRC 15346 / NCIMB 9279 / VKM B-1422 / R1).